We begin with the raw amino-acid sequence, 613 residues long: Phosphoinositide phospholipase C 6 (613 aa).

The PI-PLC X-box domain occupies 137–281 (QDMTAPLSHY…LLHRIIISTK (145 aa)). Residues His-152 and His-198 contribute to the active site. The segment at 288–349 (ESRNPIVKQK…ASEDQKPAYK (62 aa)) is disordered. One can recognise a PI-PLC Y-box domain in the interval 349–465 (KRLITIHAGK…GYVKKPNFLM (117 aa)). A C2 domain is found at 466-595 (KKGFHDEVFD…PGIRSVPLYD (130 aa)).

It depends on Ca(2+) as a cofactor. As to expression, expressed in leaves, flowers and siliques, but not in roots.

The protein localises to the cell membrane. The catalysed reaction is a 1,2-diacyl-sn-glycero-3-phospho-(1D-myo-inositol-4,5-bisphosphate) + H2O = 1D-myo-inositol 1,4,5-trisphosphate + a 1,2-diacyl-sn-glycerol + H(+). Its function is as follows. The production of the second messenger molecules diacylglycerol (DAG) and inositol 1,4,5-trisphosphate (IP3) is mediated by activated phosphatidylinositol-specific phospholipase C enzymes. The protein is Phosphoinositide phospholipase C 6 (PLC6) of Arabidopsis thaliana (Mouse-ear cress).